Consider the following 341-residue polypeptide: HTH-type transcriptional repressor PurR (341 aa).

The HTH lacI-type domain occupies 2-56; that stretch reads ATIKDVAKHAGVSTTTVSHVINKTRFVAENTKAAVWAAIKELHYSPSAVARSLKV. A DNA-binding region (H-T-H motif) is located at residues 4–23; the sequence is IKDVAKHAGVSTTTVSHVIN. Residues 48 to 56 mediate DNA binding; the sequence is SAVARSLKV. Hypoxanthine is bound by residues Y73, R190, T192, and D275.

As to quaternary structure, homodimer.

Its pathway is purine metabolism; purine nucleotide biosynthesis [regulation]. Is the main repressor of the genes involved in the de novo synthesis of purine nucleotides, regulating purB, purC, purEK, purF, purHD, purL, purMN and guaBA expression. PurR is allosterically activated to bind its cognate DNA by binding the purine corepressors, hypoxanthine or guanine, thereby effecting transcription repression. This chain is HTH-type transcriptional repressor PurR, found in Yersinia pestis bv. Antiqua (strain Antiqua).